We begin with the raw amino-acid sequence, 1388 residues long: Dicer-like protein 2 (1388 aa).

The 181-residue stretch at 23–203 (MLEASMKENI…LLMVESNLDA (181 aa)) folds into the Helicase ATP-binding domain. Residue 36-43 (MDTGSGKT) coordinates ATP. A DEAH box motif is present at residues 144–147 (DEAH). The 170-residue stretch at 368–537 (KFESLLNFLD…DDERQLQSVS (170 aa)) folds into the Helicase C-terminal domain. The Dicer dsRNA-binding fold domain maps to 564 to 658 (AMAHLHHFCA…LPLTKKPELK (95 aa)). 2 consecutive RNase III domains span residues 906–1059 (ISAI…VDGG) and 1098–1281 (NDRL…VDSG). The Mg(2+) site is built by Glu-1137, Asp-1267, and Glu-1270.

This sequence belongs to the helicase family. Dicer subfamily. Mg(2+) is required as a cofactor. Mn(2+) serves as cofactor.

Dicer-like endonuclease involved in cleaving double-stranded RNA in the RNA interference (RNAi) pathway. Produces 21 to 25 bp dsRNAs (siRNAs) which target the selective destruction of homologous RNAs leading to sequence-specific suppression of gene expression, called post-transcriptional gene silencing (PTGS). Part of a broad host defense response against viral infection and transposons. In Aspergillus fumigatus (strain ATCC MYA-4609 / CBS 101355 / FGSC A1100 / Af293) (Neosartorya fumigata), this protein is Dicer-like protein 2 (dcl2).